We begin with the raw amino-acid sequence, 457 residues long: D-hydantoinase (457 aa).

Residues histidine 57 and histidine 59 each coordinate Zn(2+). Serine 69 is modified (phosphoserine). Lysine 148 is a binding site for Zn(2+). Lysine 148 is subject to N6-carboxylysine. A substrate-binding site is contributed by tyrosine 153. Residues histidine 181 and histidine 237 each contribute to the Zn(2+) site. Threonine 286 provides a ligand contact to substrate. Aspartate 313 contributes to the Zn(2+) binding site. Position 335 (asparagine 335) interacts with substrate.

It belongs to the metallo-dependent hydrolases superfamily. Hydantoinase/dihydropyrimidinase family. Homotetramer. Requires Zn(2+) as cofactor. Post-translationally, carboxylation allows a single lysine to coordinate two zinc ions.

Its function is as follows. Catalyzes the stereospecific hydrolysis of the cyclic amide bond of D-hydantoin derivatives. In Rhizobium radiobacter (Agrobacterium tumefaciens), this protein is D-hydantoinase (hyuA).